The sequence spans 595 residues: Aspartate--tRNA(Asp/Asn) ligase (595 aa).

Glutamate 174 lines the L-aspartate pocket. The aspartate stretch occupies residues 198–201 (QLFK). Residue arginine 220 participates in L-aspartate binding. Residues 220 to 222 (RDE) and glutamine 229 each bind ATP. Histidine 452 is a binding site for L-aspartate. Glutamate 486 lines the ATP pocket. Arginine 493 contacts L-aspartate. 538 to 541 (GLDR) contributes to the ATP binding site.

This sequence belongs to the class-II aminoacyl-tRNA synthetase family. Type 1 subfamily. In terms of assembly, homodimer.

It localises to the cytoplasm. The enzyme catalyses tRNA(Asx) + L-aspartate + ATP = L-aspartyl-tRNA(Asx) + AMP + diphosphate. Its function is as follows. Aspartyl-tRNA synthetase with relaxed tRNA specificity since it is able to aspartylate not only its cognate tRNA(Asp) but also tRNA(Asn). Reaction proceeds in two steps: L-aspartate is first activated by ATP to form Asp-AMP and then transferred to the acceptor end of tRNA(Asp/Asn). The chain is Aspartate--tRNA(Asp/Asn) ligase from Nitrosococcus oceani (strain ATCC 19707 / BCRC 17464 / JCM 30415 / NCIMB 11848 / C-107).